We begin with the raw amino-acid sequence, 121 residues long: MRIKRSVTSHKKKKKYIKAAKGYSGAVGRRYSLAKQQYYKSGKYSYAGRKNKKRDYRNLWITRINAAARAQGLKYNELIHGLKLANVDINRKMLSELAVNDPDGFNEYVNIAKQSLAESVQ.

The protein belongs to the bacterial ribosomal protein bL20 family.

In terms of biological role, binds directly to 23S ribosomal RNA and is necessary for the in vitro assembly process of the 50S ribosomal subunit. It is not involved in the protein synthesizing functions of that subunit. This is Large ribosomal subunit protein bL20 from Petrotoga mobilis (strain DSM 10674 / SJ95).